The following is a 345-amino-acid chain: Phosphoribosylformylglycinamidine cyclo-ligase (345 aa).

Belongs to the AIR synthase family.

Its subcellular location is the cytoplasm. It catalyses the reaction 2-formamido-N(1)-(5-O-phospho-beta-D-ribosyl)acetamidine + ATP = 5-amino-1-(5-phospho-beta-D-ribosyl)imidazole + ADP + phosphate + H(+). It participates in purine metabolism; IMP biosynthesis via de novo pathway; 5-amino-1-(5-phospho-D-ribosyl)imidazole from N(2)-formyl-N(1)-(5-phospho-D-ribosyl)glycinamide: step 2/2. The protein is Phosphoribosylformylglycinamidine cyclo-ligase of Shewanella frigidimarina (strain NCIMB 400).